The primary structure comprises 412 residues: MKIYLVGGAVRDALLGLPVKDRDWVVVGSTPQEMLDAGYQQVGRDFPVFLHPQTHEEYALARTERKSGSGYTGFTCYAAPDVTLEDDLKRRDLTINALAQDDNGEIIDPYNGLGDLQNRLLRHVSPAFGEDPLRVLRVARFAARYAHLSFRIADETLALMREMTHAGELEHLTPERVWKETENALTTRNPQVFFQVLRDCGALRVLFPEIDALFGVPAPARWHPEIDTGIHTLMTLSMAAMLSPQVDVRFATLCHDLGKGLTPPELWPRHHGHGPAGVKLVEQLCQRLRVPNEILDLARLVAEFHDLIHTFPMLNPKTIVKLFDSIDAWRKPQRVEQLALTSEADVRGRTGFESADYPQGRWLREAWEVAQSVPTKAVVEAGFKGVEIREELTRRRIAAVASWKEQRCPKPD.

ATP-binding residues include glycine 8 and arginine 11. CTP is bound by residues glycine 8 and arginine 11. Mg(2+) contacts are provided by aspartate 21 and aspartate 23. Positions 91, 137, and 140 each coordinate ATP. CTP is bound by residues arginine 91, arginine 137, and arginine 140. Residues 228–329 (TGIHTLMTLS…VKLFDSIDAW (102 aa)) form the HD domain.

It belongs to the tRNA nucleotidyltransferase/poly(A) polymerase family. Bacterial CCA-adding enzyme type 1 subfamily. In terms of assembly, monomer. Can also form homodimers and oligomers. Requires Mg(2+) as cofactor. It depends on Ni(2+) as a cofactor.

The enzyme catalyses a tRNA precursor + 2 CTP + ATP = a tRNA with a 3' CCA end + 3 diphosphate. It carries out the reaction a tRNA with a 3' CCA end + 2 CTP + ATP = a tRNA with a 3' CCACCA end + 3 diphosphate. Functionally, catalyzes the addition and repair of the essential 3'-terminal CCA sequence in tRNAs without using a nucleic acid template. Adds these three nucleotides in the order of C, C, and A to the tRNA nucleotide-73, using CTP and ATP as substrates and producing inorganic pyrophosphate. tRNA 3'-terminal CCA addition is required both for tRNA processing and repair. Also involved in tRNA surveillance by mediating tandem CCA addition to generate a CCACCA at the 3' terminus of unstable tRNAs. While stable tRNAs receive only 3'-terminal CCA, unstable tRNAs are marked with CCACCA and rapidly degraded. The sequence is that of Multifunctional CCA protein from Escherichia coli O6:H1 (strain CFT073 / ATCC 700928 / UPEC).